The chain runs to 339 residues: Uracil nucleotide/cysteinyl leukotriene receptor (339 aa).

The Extracellular portion of the chain corresponds to 1 to 36; sequence MDGLETALPSLTDNASLAYSEQCGQETPLENMLFAC. Asparagine 14 carries an N-linked (GlcNAc...) asparagine glycan. The helical transmembrane segment at 37–57 threads the bilayer; it reads FYLLDFILAFVGNALALWLFI. Topologically, residues 58 to 64 are cytoplasmic; that stretch reads WDHKSGT. A helical membrane pass occupies residues 65 to 85; sequence PANVFLMHLAVADLSCVLVLP. Topologically, residues 86 to 105 are extracellular; sequence TRLVYHFSGNHWPFGEIPCR. An intrachain disulfide couples cysteine 104 to cysteine 181. A helical transmembrane segment spans residues 106 to 126; it reads LTGFLFYLNMYASIYFLTCIS. The Cytoplasmic segment spans residues 127–147; the sequence is ADRFLAIVHPVKSLKLRRPLY. Residues 148 to 168 form a helical membrane-spanning segment; sequence AHLACAFLWIVVAVAMAPLLV. Residues 169–195 are Extracellular-facing; the sequence is SPQTVQTNHTVVCLQLYREKASHHALA. The N-linked (GlcNAc...) asparagine glycan is linked to asparagine 176. Residues 196 to 216 traverse the membrane as a helical segment; it reads SLAVAFTFPFITTVTCYLLII. Residues 217–232 are Cytoplasmic-facing; it reads RSLRQGPRIEKHLKNK. The helical transmembrane segment at 233–253 threads the bilayer; it reads AVRMIAMVLAIFLICFVPYHI. Over 254 to 280 the chain is Extracellular; sequence HRSVYVLHYRGGGTSCSAQRALALGNR. A helical transmembrane segment spans residues 281 to 301; the sequence is ITSCLTSLNGALDPVMYFFVA. Residues 302 to 339 lie on the Cytoplasmic side of the membrane; it reads EKFRHALCNLLCSKRLTGPPPSFEGKTNESSLSARSEL.

Belongs to the G-protein coupled receptor 1 family. As to expression, expressed in brain, kidney, and heart. Highest level in brain.

Its subcellular location is the cell membrane. Functionally, dual specificity receptor for uracil nucleotides and cysteinyl leukotrienes (CysLTs). Signals through G(i) and inhibition of adenylyl cyclase. May mediate brain damage by nucleotides and CysLTs following ischemia. The chain is Uracil nucleotide/cysteinyl leukotriene receptor from Rattus norvegicus (Rat).